Consider the following 212-residue polypeptide: Cytidylate kinase (212 aa).

7-15 (GPAASGKGT) contributes to the ATP binding site.

It belongs to the cytidylate kinase family. Type 1 subfamily.

It is found in the cytoplasm. The enzyme catalyses CMP + ATP = CDP + ADP. It catalyses the reaction dCMP + ATP = dCDP + ADP. In Nitrobacter winogradskyi (strain ATCC 25391 / DSM 10237 / CIP 104748 / NCIMB 11846 / Nb-255), this protein is Cytidylate kinase.